A 440-amino-acid chain; its full sequence is Thymidine phosphorylase (440 aa).

Belongs to the thymidine/pyrimidine-nucleoside phosphorylase family. As to quaternary structure, homodimer.

It carries out the reaction thymidine + phosphate = 2-deoxy-alpha-D-ribose 1-phosphate + thymine. It functions in the pathway pyrimidine metabolism; dTMP biosynthesis via salvage pathway; dTMP from thymine: step 1/2. The enzymes which catalyze the reversible phosphorolysis of pyrimidine nucleosides are involved in the degradation of these compounds and in their utilization as carbon and energy sources, or in the rescue of pyrimidine bases for nucleotide synthesis. This Rhizobium meliloti (strain 1021) (Ensifer meliloti) protein is Thymidine phosphorylase.